We begin with the raw amino-acid sequence, 387 residues long: Succinate--CoA ligase [ADP-forming] subunit beta (387 aa).

The region spanning Lys9–Glu244 is the ATP-grasp domain. Residues Lys46, Gly53–Gly55, Glu99, Ala102, and Glu107 contribute to the ATP site. Asn199 and Asp213 together coordinate Mg(2+). Residues Asn264 and Gly321–Val323 each bind substrate.

Belongs to the succinate/malate CoA ligase beta subunit family. As to quaternary structure, heterotetramer of two alpha and two beta subunits. Mg(2+) serves as cofactor.

The catalysed reaction is succinate + ATP + CoA = succinyl-CoA + ADP + phosphate. It carries out the reaction GTP + succinate + CoA = succinyl-CoA + GDP + phosphate. It participates in carbohydrate metabolism; tricarboxylic acid cycle; succinate from succinyl-CoA (ligase route): step 1/1. Its function is as follows. Succinyl-CoA synthetase functions in the citric acid cycle (TCA), coupling the hydrolysis of succinyl-CoA to the synthesis of either ATP or GTP and thus represents the only step of substrate-level phosphorylation in the TCA. The beta subunit provides nucleotide specificity of the enzyme and binds the substrate succinate, while the binding sites for coenzyme A and phosphate are found in the alpha subunit. This is Succinate--CoA ligase [ADP-forming] subunit beta from Campylobacter jejuni subsp. jejuni serotype O:6 (strain 81116 / NCTC 11828).